Reading from the N-terminus, the 246-residue chain is Uridylate kinase (246 aa).

18–21 (KVSG) lines the ATP pocket. UMP is bound at residue Gly60. Positions 61 and 65 each coordinate ATP. Residues Asp80 and 141–148 (TGNPFFTT) each bind UMP. Residues Thr168, Gln169, Tyr174, and Asp177 each coordinate ATP.

The protein belongs to the UMP kinase family. As to quaternary structure, homohexamer.

The protein localises to the cytoplasm. It carries out the reaction UMP + ATP = UDP + ADP. The protein operates within pyrimidine metabolism; CTP biosynthesis via de novo pathway; UDP from UMP (UMPK route): step 1/1. Inhibited by UTP. Its function is as follows. Catalyzes the reversible phosphorylation of UMP to UDP. In Gluconobacter oxydans (strain 621H) (Gluconobacter suboxydans), this protein is Uridylate kinase.